Reading from the N-terminus, the 336-residue chain is tRNA dimethylallyltransferase (336 aa).

ATP is bound at residue 19 to 26 (GPTASGKT). A substrate-binding site is contributed by 21–26 (TASGKT).

It belongs to the IPP transferase family. As to quaternary structure, monomer. Mg(2+) serves as cofactor.

The catalysed reaction is adenosine(37) in tRNA + dimethylallyl diphosphate = N(6)-dimethylallyladenosine(37) in tRNA + diphosphate. Catalyzes the transfer of a dimethylallyl group onto the adenine at position 37 in tRNAs that read codons beginning with uridine, leading to the formation of N6-(dimethylallyl)adenosine (i(6)A). The polypeptide is tRNA dimethylallyltransferase (Bifidobacterium adolescentis (strain ATCC 15703 / DSM 20083 / NCTC 11814 / E194a)).